Reading from the N-terminus, the 914-residue chain is MDRGSKRRQVKPLADSLLDALDYDSSDDSDFKVGESSGSEGTGNGSDEEGSKESAAGSESDSDAAAASADEEGIDDLETKDLNQEDDEEEKVKESFSEETSSKETGGSSRSRKKGEKSSDMEPNGSATTEENSAEPKKWNLRRNRPMLDFTTMEELNEMDDYDSEDDNDWRPTQGKKKGKASSGKEKEGSGEEDDDDDDGGSDEEDNEDDNDDDDDDDDEGNDDESSSSDSEEEGKKPKKKAGKNTGAFDEEETNDSHSTSHGKGNEDSLLERPQTWSSQRMEHILICCVCLGDNSEDADEIIQCDNCGVTVHEGCYGVDGESDSIMSSASENSTEPWFCDACKNGVSPSCELCPSQDGIFKETDAGRWVHVVCALYVPGVAFGDIDKLRPVTLTEMNYSKYGAKECSLCEDTRFARTGVCISCDAGMCRSFFHVTCAQREGLLSEAAAEEDIADPFFAYCKQHADRFDRKWKRKNYLALQSYCKVSLQEREKQLTPEAQARITTRLQQYRAKAELSRNTRPQAWVPREKLPRPLTSSASAIRKLMRKAELMGISTDIFPVDTSDISASVDGRRKHKQPALTADFVNYYLERNMRMIQIQDNIVEQKNLKDKLESEQEKLHMEYDKLCESLEDLQNVNGQLRTEGQSIWSMMGGIVGQKLNVPAVLKAPKERKPSKKEGGSPGKSSSLPAMLYSCGICKKNQDQHLLLLCDTCKLHYHLGCLDPPLTRMPKKTKNSYWQCSECDQASSDEADIAMETLPDGTKRSRRQIKGPIKFIPQEMSPEPKKPQVRGTRTRGQKRKRMSICEEEKMEEPLPRERRQRQSTLQKKPKADDTRTECTTCKGPGDNENLVRCDECRLCYHFGCLDPPLKKSPKQTGYGWICQECDTSSSKEEEAQEVEEESVNEETAEQEIPD.

The disordered stretch occupies residues 19–276; it reads DALDYDSSDD…EDSLLERPQT (258 aa). A compositionally biased stretch (low complexity) spans 53–68; the sequence is ESAAGSESDSDAAAAS. The span at 90–102 shows a compositional bias: basic and acidic residues; that stretch reads EKVKESFSEETSS. Composition is skewed to acidic residues over residues 155-168 and 191-233; these read ELNE…EDDN and GEED…DSEE. The PHD-type 1 zinc-finger motif lies at 285-346; the sequence is ILICCVCLGD…PWFCDACKNG (62 aa). Zn(2+) is bound by residues Cys288, Cys291, Cys305, Cys308, His313, Cys316, Cys340, Cys343, Cys351, Cys354, His371, Cys374, Cys407, Cys410, Cys424, Cys429, His434, Cys437, Cys461, and His464. Residues 348–381 form a C2HC pre-PHD-type zinc finger; that stretch reads SPSCELCPSQDGIFKETDAGRWVHVVCALYVPGV. Residues 405–465 form a PHD-type 2 zinc finger; that stretch reads KECSLCEDTR…PFFAYCKQHA (61 aa). The stretch at 596–644 forms a coiled coil; sequence MIQIQDNIVEQKNLKDKLESEQEKLHMEYDKLCESLEDLQNVNGQLRTE. A PHD-type 3 zinc finger spans residues 692-746; it reads LYSCGICKKNQDQHLLLLCDTCKLHYHLGCLDPPLTRMPKKTKNSYWQCSECDQA. Positions 695, 698, 710, 713, 718, 721, 740, and 743 each coordinate Zn(2+). A disordered region spans residues 777–838; it reads PQEMSPEPKK…PKADDTRTEC (62 aa). The span at 792–802 shows a compositional bias: basic residues; sequence TRTRGQKRKRM. A compositionally biased stretch (basic and acidic residues) spans 803 to 817; it reads SICEEEKMEEPLPRE. A PHD-type 4 zinc finger spans residues 835–888; that stretch reads RTECTTCKGPGDNENLVRCDECRLCYHFGCLDPPLKKSPKQTGYGWICQECDTS. Positions 838, 841, 853, 856, 861, 864, 882, and 885 each coordinate Zn(2+). The disordered stretch occupies residues 887–914; that stretch reads TSSSKEEEAQEVEEESVNEETAEQEIPD. Positions 894–914 are enriched in acidic residues; that stretch reads EAQEVEEESVNEETAEQEIPD.

Interacts with histone H3.

The protein resides in the nucleus. In terms of biological role, histone-binding protein. Binds preferentially to unmodified histone H3 but can also bind to a lesser extent to histone H3 trimethylated at 'Lys-9' (H3K9me3) as well as to histone H3 monomethylated at 'Lys-27' (H3K27ac) and trimethylated at 'Lys-27' (H3K27me3). Represses PDGFRA expression, thus playing a role in regulation of mesenchymal cell proliferation. This Danio rerio (Zebrafish) protein is PHD finger protein 14.